Here is a 239-residue protein sequence, read N- to C-terminus: Prolactin-8A4 (239 aa).

The signal sequence occupies residues 1 to 31; that stretch reads MMKLALSQPPFSGTLLMLVVSILLLWEKAAS. 2 disulfide bridges follow: Cys35/Cys42 and Cys102/Cys215. N-linked (GlcNAc...) asparagine glycans are attached at residues Asn211 and Asn218. An intrachain disulfide couples Cys232 to Cys239.

It belongs to the somatotropin/prolactin family. As to expression, placental basal zone cells.

The protein resides in the secreted. This chain is Prolactin-8A4 (Prl8a4), found in Rattus norvegicus (Rat).